We begin with the raw amino-acid sequence, 416 residues long: D-amino acid dehydrogenase (416 aa).

3 to 17 serves as a coordination point for FAD; it reads VTILGAGVIGVTTAY.

The protein belongs to the DadA oxidoreductase family. FAD is required as a cofactor.

The catalysed reaction is a D-alpha-amino acid + A + H2O = a 2-oxocarboxylate + AH2 + NH4(+). It functions in the pathway amino-acid degradation; D-alanine degradation; NH(3) and pyruvate from D-alanine: step 1/1. Functionally, oxidative deamination of D-amino acids. The sequence is that of D-amino acid dehydrogenase from Rhizobium rhizogenes (strain K84 / ATCC BAA-868) (Agrobacterium radiobacter).